The sequence spans 558 residues: Alkaline/neutral invertase CINV2 (558 aa).

3 positions are modified to phosphoserine: serine 16, serine 19, and serine 50. Residue threonine 79 is modified to Phosphothreonine. Serine 555 carries the post-translational modification Phosphoserine.

The protein belongs to the glycosyl hydrolase 100 family.

It is found in the cytoplasm. Its subcellular location is the cytosol. It catalyses the reaction Hydrolysis of terminal non-reducing beta-D-fructofuranoside residues in beta-D-fructofuranosides.. Its function is as follows. Cytosolic invertase that may cleave sucrose into glucose and fructose, and that is involved in the regulation of root growth. May regulate sugar-mediated root development by controlling sucrose catabolism in root cells. The polypeptide is Alkaline/neutral invertase CINV2 (Arabidopsis thaliana (Mouse-ear cress)).